Reading from the N-terminus, the 361-residue chain is tRNA-specific 2-thiouridylase MnmA (361 aa).

ATP contacts are provided by residues 8–15 (AMSGGVDS) and M35. Residues 95–97 (NPD) form an interaction with target base in tRNA region. C100 acts as the Nucleophile in catalysis. A disulfide bridge links C100 with C196. Residue G124 coordinates ATP. Positions 146–148 (KDQ) are interaction with tRNA. C196 serves as the catalytic Cysteine persulfide intermediate. Positions 303-304 (RY) are interaction with tRNA.

This sequence belongs to the MnmA/TRMU family.

The protein localises to the cytoplasm. The enzyme catalyses S-sulfanyl-L-cysteinyl-[protein] + uridine(34) in tRNA + AH2 + ATP = 2-thiouridine(34) in tRNA + L-cysteinyl-[protein] + A + AMP + diphosphate + H(+). Functionally, catalyzes the 2-thiolation of uridine at the wobble position (U34) of tRNA, leading to the formation of s(2)U34. The sequence is that of tRNA-specific 2-thiouridylase MnmA from Chlamydia felis (strain Fe/C-56) (Chlamydophila felis).